A 624-amino-acid polypeptide reads, in one-letter code: Probable potassium transport system protein Kup (624 aa).

The next 12 helical transmembrane spans lie at 16-36 (ALLTLGALGVVFGDIGTSPLY), 59-79 (IISMVLWTITLIVTVKYVMLV), 106-126 (FVAVAGMLGAALFYGDVVITP), 147-167 (FILPVSLAVLIAIFAIQPLGT), 174-194 (FGPIMLLWFVTLAGLGIPQII), 211-231 (LIVAEPFQAFVLLGAVVLTVT), 252-272 (WFCVVMPALILTYLGQGALVI), 292-312 (IPLVILATIATVIASQAVISG), 342-362 (IYMPLVNGLLFVSVMVVVLVF), 371-391 (AYGLAVTGTLVLVSVLYLIYV), 394-414 (TWWKTALFIVLIGIPEVLLFA), and 418-438 (TKIHDGGWLPLLIAAVLIVVM).

This sequence belongs to the HAK/KUP transporter (TC 2.A.72) family.

The protein resides in the cell membrane. The catalysed reaction is K(+)(in) + H(+)(in) = K(+)(out) + H(+)(out). Transport of potassium into the cell. Likely operates as a K(+):H(+) symporter. The chain is Probable potassium transport system protein Kup from Corynebacterium glutamicum (strain ATCC 13032 / DSM 20300 / JCM 1318 / BCRC 11384 / CCUG 27702 / LMG 3730 / NBRC 12168 / NCIMB 10025 / NRRL B-2784 / 534).